The following is a 164-amino-acid chain: UPF0178 protein BRADO3147 (164 aa).

Belongs to the UPF0178 family.

This Bradyrhizobium sp. (strain ORS 278) protein is UPF0178 protein BRADO3147.